The following is a 346-amino-acid chain: Holliday junction branch migration complex subunit RuvB (346 aa).

The interval 1–182 (MSERLVTSNE…FGVLCSMEYY (182 aa)) is large ATPase domain (RuvB-L). ATP-binding positions include Leu21, Arg22, Gly63, Lys66, Thr67, Thr68, 129–131 (EDY), Arg172, Tyr182, and Arg219. Thr67 is a binding site for Mg(2+). The tract at residues 183 to 253 (TDEQLKEIII…AAKKSLEILE (71 aa)) is small ATPAse domain (RuvB-S). Residues 256 to 346 (GEGFDRIDNK…DSKQCTLFEK (91 aa)) form a head domain (RuvB-H) region. DNA is bound by residues Arg311 and Arg316.

Belongs to the RuvB family. Homohexamer. Forms an RuvA(8)-RuvB(12)-Holliday junction (HJ) complex. HJ DNA is sandwiched between 2 RuvA tetramers; dsDNA enters through RuvA and exits via RuvB. An RuvB hexamer assembles on each DNA strand where it exits the tetramer. Each RuvB hexamer is contacted by two RuvA subunits (via domain III) on 2 adjacent RuvB subunits; this complex drives branch migration. In the full resolvosome a probable DNA-RuvA(4)-RuvB(12)-RuvC(2) complex forms which resolves the HJ.

The protein localises to the cytoplasm. The enzyme catalyses ATP + H2O = ADP + phosphate + H(+). The RuvA-RuvB-RuvC complex processes Holliday junction (HJ) DNA during genetic recombination and DNA repair, while the RuvA-RuvB complex plays an important role in the rescue of blocked DNA replication forks via replication fork reversal (RFR). RuvA specifically binds to HJ cruciform DNA, conferring on it an open structure. The RuvB hexamer acts as an ATP-dependent pump, pulling dsDNA into and through the RuvAB complex. RuvB forms 2 homohexamers on either side of HJ DNA bound by 1 or 2 RuvA tetramers; 4 subunits per hexamer contact DNA at a time. Coordinated motions by a converter formed by DNA-disengaged RuvB subunits stimulates ATP hydrolysis and nucleotide exchange. Immobilization of the converter enables RuvB to convert the ATP-contained energy into a lever motion, pulling 2 nucleotides of DNA out of the RuvA tetramer per ATP hydrolyzed, thus driving DNA branch migration. The RuvB motors rotate together with the DNA substrate, which together with the progressing nucleotide cycle form the mechanistic basis for DNA recombination by continuous HJ branch migration. Branch migration allows RuvC to scan DNA until it finds its consensus sequence, where it cleaves and resolves cruciform DNA. The protein is Holliday junction branch migration complex subunit RuvB of Clostridium perfringens (strain ATCC 13124 / DSM 756 / JCM 1290 / NCIMB 6125 / NCTC 8237 / Type A).